We begin with the raw amino-acid sequence, 163 residues long: Lipoprotein signal peptidase (163 aa).

3 consecutive transmembrane segments (helical) span residues 11 to 31 (ILIA…IATT), 64 to 84 (MTFF…FFIN), and 88 to 108 (YNLF…GNFI). Catalysis depends on residues Asp-118 and Asp-136. The chain crosses the membrane as a helical span at residues 131-151 (IFNIADSSLTIGVILIIIALL).

Belongs to the peptidase A8 family.

It is found in the cell membrane. The catalysed reaction is Release of signal peptides from bacterial membrane prolipoproteins. Hydrolyzes -Xaa-Yaa-Zaa-|-(S,diacylglyceryl)Cys-, in which Xaa is hydrophobic (preferably Leu), and Yaa (Ala or Ser) and Zaa (Gly or Ala) have small, neutral side chains.. Its pathway is protein modification; lipoprotein biosynthesis (signal peptide cleavage). This protein specifically catalyzes the removal of signal peptides from prolipoproteins. This is Lipoprotein signal peptidase from Staphylococcus aureus (strain bovine RF122 / ET3-1).